The primary structure comprises 940 residues: Isoleucine--tRNA ligase (940 aa).

Residues 58–68 (PYANGDIHIGH) carry the 'HIGH' region motif. An L-isoleucyl-5'-AMP-binding site is contributed by E564. The 'KMSKS' region signature appears at 605–609 (KMSKS). Residue K608 participates in ATP binding. Residues C903, C906, C923, and C926 each contribute to the Zn(2+) site.

The protein belongs to the class-I aminoacyl-tRNA synthetase family. IleS type 1 subfamily. As to quaternary structure, monomer. Zn(2+) is required as a cofactor.

The protein resides in the cytoplasm. The catalysed reaction is tRNA(Ile) + L-isoleucine + ATP = L-isoleucyl-tRNA(Ile) + AMP + diphosphate. Catalyzes the attachment of isoleucine to tRNA(Ile). As IleRS can inadvertently accommodate and process structurally similar amino acids such as valine, to avoid such errors it has two additional distinct tRNA(Ile)-dependent editing activities. One activity is designated as 'pretransfer' editing and involves the hydrolysis of activated Val-AMP. The other activity is designated 'posttransfer' editing and involves deacylation of mischarged Val-tRNA(Ile). The protein is Isoleucine--tRNA ligase of Shewanella piezotolerans (strain WP3 / JCM 13877).